Consider the following 490-residue polypeptide: Serine/threonine-protein kinase BSK6 (490 aa).

Gly2 is lipidated: N-myristoyl glycine. Ser25 carries the post-translational modification Phosphoserine. One can recognise a Protein kinase domain in the interval 56–310; sequence DNIVSEHGEK…KSLVTSLVTL (255 aa). Residues 62-70 and Lys84 each bind ATP; that span reads HGEKAPNVV. Asp178 (proton acceptor) is an active-site residue. Ser373 is modified (phosphoserine).

Belongs to the protein kinase superfamily. Ser/Thr protein kinase family. In terms of assembly, interacts with BRI1, ASK7/BIN2, ASK9/BIL2, BSK1, BSK5, BSK8 and BSK11. Phosphorylated by BRI1, ASK7/BIN2 and ASK9/BIL2.

The protein resides in the cell membrane. It catalyses the reaction L-seryl-[protein] + ATP = O-phospho-L-seryl-[protein] + ADP + H(+). The catalysed reaction is L-threonyl-[protein] + ATP = O-phospho-L-threonyl-[protein] + ADP + H(+). Its function is as follows. Probable serine/threonine kinase that acts as a positive regulator of brassinosteroid (BR) signaling downstream of the receptor kinase BRI1. Functions redundantly with BSK3, BSK4, BSK7 and BSK8. The chain is Serine/threonine-protein kinase BSK6 from Arabidopsis thaliana (Mouse-ear cress).